A 185-amino-acid chain; its full sequence is Recombination protein RecR (185 aa).

The C4-type zinc finger occupies 44-59 (CSVCFHLSSEPVCEIC). The Toprim domain maps to 67–161 (NTICVVADSR…KVTRIAFGLP (95 aa)).

Belongs to the RecR family.

In terms of biological role, may play a role in DNA repair. It seems to be involved in an RecBC-independent recombinational process of DNA repair. It may act with RecF and RecO. In Trichormus variabilis (strain ATCC 29413 / PCC 7937) (Anabaena variabilis), this protein is Recombination protein RecR.